A 689-amino-acid polypeptide reads, in one-letter code: MSEKTFLVEIGTEELPPKALRSLAESFAANFTAELDNAGLAHGTVQWFAAPRRLALKVANLAEAQPDREIEKRGPAIAQAFDAEGKPSKAAEGWARGCGITVDQAERLTTDKGEWLLYRAYVKGESTEALLPNMVATSLAKLPIPKLMRWGASDVHFVRPVHTVTLLLGDKVIPATILGIQSDRVIRGHRFMGEPEFTIDNADQYPEILRERGKVIADYEERKAKIKADAEEAARKIGGNADLSESLLEEVASLVEWPVVLTAKFEEKFLAVPSEALVYTMKGDQKYFPVYANDGKLLPNFIFVANIESKDPQQIISGNEKVVRPRLADAEFFFNTDRKKRLEDNLPRLQTVLFQQQLGTLRDKTDRIQALAGWIAEQIGADVNHATRAGLLSKCDLMTNMVFEFTDTQGVMGMHYARHDGEAEDVAVALNEQYQPRFAGDDLPSNPVACALAIADKMDTLAGIFGIGQHPKGDKDPFALRRAALGVLRIIVEKNLNLDLQTLTEEAVRLYGDKLTNASVVDDVIDFMLGRFRAWYQDEGYSVDTIQAVLARRPTRPADFDARMKAVSHFRTLEEASALAAANKRVSNILAKATEPLNDIVHASVLKEAAEIELARHLVVLRDKLQPYFADGRYQEALIELAALRAPVDEFFENVMVNAEEKDIRINRLTLLSKLRELFLQVADISLLQ.

This sequence belongs to the class-II aminoacyl-tRNA synthetase family. Tetramer of two alpha and two beta subunits.

It is found in the cytoplasm. The enzyme catalyses tRNA(Gly) + glycine + ATP = glycyl-tRNA(Gly) + AMP + diphosphate. This Salmonella typhi protein is Glycine--tRNA ligase beta subunit.